A 443-amino-acid chain; its full sequence is Monooxygenase asqM (443 aa).

Belongs to the aromatic-ring hydroxylase family. The cofactor is FAD.

The protein operates within secondary metabolite biosynthesis. It participates in alkaloid biosynthesis. It functions in the pathway mycotoxin biosynthesis. In terms of biological role, monooxygenase; part of the gene cluster that mediates the biosynthesis of the aspoquinolone mycotoxins. The role of asqM within the aspoquinolone pathway has still to be determined. The first step of the pathway is catalyzed by the nonribosomal peptide synthetase asqK that condenses anthranilic acid and O-methyl-L-tyrosine to produce 4'-methoxycyclopeptin. 4'-methoxycyclopeptin is then converted to 4'-methoxydehydrocyclopeptin by the ketoglutarate-dependent dioxygenase asqJ. AsqJ also converts its first product 4'-methoxydehydrocyclopeptin to 4'-methoxycyclopenin. The following conversion of 4'-methoxycyclopenin into 4'-methoxyviridicatin is catalyzed by the cyclopenase asqI. 4'-methoxyviridicatin is the precursor of quinolone natural products, and is further converted to quinolinone B. The prenyltransferase asqH1 then catalyzes the canonical Friedel-Crafts alkylation of quinolinone B with dimethylallyl cation to yield dimethylallyl quinolone, which is subjected to FAD-dependent dehydrogenation by the FAD-linked oxidoreductase asqF to yield conjugated aryl diene. The delta(3') double bond then serves as the site of the second alkylation with DMAPP catalyzed by the prenyltransferase asqH2 to yield a carbenium ion intermediate, which can be attacked by H(2)O to yield a styrenyl quinolone containing a C3'-hydroxyprenyl chain. The FAD-dependent monooxygenase asqG performs epoxidation of the terminal C7'-C8' olefin. Finally, after dehydratation of the epoxide at C3 by asqC, the quinolone epoxide rearrangement protein asqO catalyzes an enzymatic 3-exo-tet cyclization to yield the cyclopropyl-THF ring system in aspoquinolone. The protein is Monooxygenase asqM of Emericella nidulans (strain FGSC A4 / ATCC 38163 / CBS 112.46 / NRRL 194 / M139) (Aspergillus nidulans).